The primary structure comprises 233 residues: MKTESLTISLEEMMEAGVHFGHQTRKWNPKMAPYIFTKRRGIYILHIFKTARLLAEACEFSANAASQGKQFLIVGTKYQAADLVSAAAKKARCHYVNQKWLGGMLTNWSTIETRVTRLKQLEDQENAGVLNQLPKKEAAVLKRQLIQLRKYLEGIKYMTRLPDIVIIIDQQKEATAVEECIKLGIPTICLVDTDCDPDLTDMPIPANDDARSSIRWILDKLTTAIREGRNRVT.

Belongs to the universal ribosomal protein uS2 family.

It localises to the plastid. The protein localises to the chloroplast. The sequence is that of Small ribosomal subunit protein uS2c (rps2) from Staurastrum punctulatum (Green alga).